We begin with the raw amino-acid sequence, 304 residues long: GTP cyclohydrolase FolE2 (304 aa).

This sequence belongs to the GTP cyclohydrolase IV family.

It catalyses the reaction GTP + H2O = 7,8-dihydroneopterin 3'-triphosphate + formate + H(+). It functions in the pathway cofactor biosynthesis; 7,8-dihydroneopterin triphosphate biosynthesis; 7,8-dihydroneopterin triphosphate from GTP: step 1/1. In terms of biological role, converts GTP to 7,8-dihydroneopterin triphosphate. The protein is GTP cyclohydrolase FolE2 of Hahella chejuensis (strain KCTC 2396).